A 405-amino-acid polypeptide reads, in one-letter code: Probable tRNA sulfurtransferase (405 aa).

In terms of domain architecture, THUMP spans aspartate 60–valine 165. Residues methionine 183–leucine 184, histidine 208–phenylalanine 209, arginine 265, glycine 287, and glutamine 296 each bind ATP.

It belongs to the ThiI family.

It is found in the cytoplasm. The enzyme catalyses [ThiI sulfur-carrier protein]-S-sulfanyl-L-cysteine + a uridine in tRNA + 2 reduced [2Fe-2S]-[ferredoxin] + ATP + H(+) = [ThiI sulfur-carrier protein]-L-cysteine + a 4-thiouridine in tRNA + 2 oxidized [2Fe-2S]-[ferredoxin] + AMP + diphosphate. It catalyses the reaction [ThiS sulfur-carrier protein]-C-terminal Gly-Gly-AMP + S-sulfanyl-L-cysteinyl-[cysteine desulfurase] + AH2 = [ThiS sulfur-carrier protein]-C-terminal-Gly-aminoethanethioate + L-cysteinyl-[cysteine desulfurase] + A + AMP + 2 H(+). Its pathway is cofactor biosynthesis; thiamine diphosphate biosynthesis. Catalyzes the ATP-dependent transfer of a sulfur to tRNA to produce 4-thiouridine in position 8 of tRNAs, which functions as a near-UV photosensor. Also catalyzes the transfer of sulfur to the sulfur carrier protein ThiS, forming ThiS-thiocarboxylate. This is a step in the synthesis of thiazole, in the thiamine biosynthesis pathway. The sulfur is donated as persulfide by IscS. This is Probable tRNA sulfurtransferase from Pediococcus pentosaceus (strain ATCC 25745 / CCUG 21536 / LMG 10740 / 183-1w).